The sequence spans 291 residues: ATP synthase subunit a (291 aa).

The next 6 helical transmembrane spans lie at 50 to 70 (LDSM…FWIV), 108 to 128 (IAPL…MDLI), 161 to 181 (DPNI…FYSI), 203 to 223 (PVAK…TFLA), 241 to 261 (LIFI…SVPW), and 262 to 282 (AIFH…LTIV).

It belongs to the ATPase A chain family. In terms of assembly, F-type ATPases have 2 components, CF(1) - the catalytic core - and CF(0) - the membrane proton channel. CF(1) has five subunits: alpha(3), beta(3), gamma(1), delta(1), epsilon(1). CF(0) has three main subunits: a(1), b(2) and c(9-12). The alpha and beta chains form an alternating ring which encloses part of the gamma chain. CF(1) is attached to CF(0) by a central stalk formed by the gamma and epsilon chains, while a peripheral stalk is formed by the delta and b chains.

The protein resides in the cell inner membrane. Its function is as follows. Key component of the proton channel; it plays a direct role in the translocation of protons across the membrane. This is ATP synthase subunit a from Acinetobacter baumannii (strain SDF).